Consider the following 62-residue polypeptide: Large ribosomal subunit protein uL29 (62 aa).

The protein belongs to the universal ribosomal protein uL29 family.

This Acholeplasma laidlawii (strain PG-8A) protein is Large ribosomal subunit protein uL29.